The sequence spans 91 residues: Defensin-like protein 269 (91 aa).

The signal sequence occupies residues M1 to A25. 4 disulfides stabilise this stretch: C41–C82, C53–C72, C59–C77, and C63–C79.

The protein belongs to the DEFL family.

The protein resides in the secreted. The protein is Defensin-like protein 269 of Arabidopsis thaliana (Mouse-ear cress).